The following is a 234-amino-acid chain: Short neuropeptide F (234 aa).

The N-terminal stretch at 1 to 22 (MYRINLTTFTLLLVLAVGSLMS) is a signal peptide. The propeptide occupies 23-56 (ESLHPSDGAINDLYEYLLQREYAAPVSYADHQIK). A phenylalanine amide mark is found at Phe69 and Phe101. Tryptophan amide is present on Trp132. Phe165 is modified (phenylalanine amide). Residues 181-190 (TTGQQAQPAN) are compositionally biased toward polar residues. Residues 181 to 234 (TTGQQAQPANEASEKRAPTQRLRWGRSDPALAKDSSEDKALDVEESENTNADDK) are disordered. Trp204 bears the Tryptophan amide mark. Positions 207 to 234 (SDPALAKDSSEDKALDVEESENTNADDK) are excised as a propeptide.

It belongs to the NPY family. Expressed in all body parts of larva, pupae and adults.

The protein resides in the secreted. Its function is as follows. Plays a role in controlling food intake and regulating body size. The protein is Short neuropeptide F of Anopheles gambiae (African malaria mosquito).